Consider the following 187-residue polypeptide: Ribonuclease M5 (187 aa).

The 84-residue stretch at 5 to 88 (KEVIVVEGKD…AFLPRKAGVP (84 aa)) folds into the Toprim domain. Mg(2+)-binding residues include E11, D57, and D59.

It belongs to the ribonuclease M5 family. Requires Mg(2+) as cofactor.

The protein localises to the cytoplasm. It catalyses the reaction Endonucleolytic cleavage of RNA, removing 21 and 42 nucleotides, respectively, from the 5'- and 3'-termini of a 5S-rRNA precursor.. Required for correct processing of both the 5' and 3' ends of 5S rRNA precursor. Cleaves both sides of a double-stranded region yielding mature 5S rRNA in one step. The protein is Ribonuclease M5 of Lactiplantibacillus plantarum (strain ATCC BAA-793 / NCIMB 8826 / WCFS1) (Lactobacillus plantarum).